A 289-amino-acid polypeptide reads, in one-letter code: Ferri-bacillibactin esterase BesA (289 aa).

Active-site charge relay system residues include Ser163, Glu225, and His263.

Belongs to the esterase D family.

The protein localises to the cytoplasm. In terms of biological role, catalyzes the hydrolysis of the trilactone cycle of ferri-bacillibactin (ferri-BB) complex, leading to the formation of bacillibactin monomers and to cytosolic iron release, thus making iron available for metabolic use. Can also hydrolyze bacillibactin (BB), however the catalytic efficiency for ferri-BB hydrolysis is much higher than for BB. The polypeptide is Ferri-bacillibactin esterase BesA (besA) (Bacillus subtilis (strain 168)).